Consider the following 527-residue polypeptide: Palmitoleoyl-protein carboxylesterase NOTUM (527 aa).

Residues 1–19 (MKSYLILNTLLLSLLKING) form the signal peptide. N-linked (GlcNAc...) asparagine glycans are attached at residues N64, N86, and N104. S203 serves as the catalytic Charge relay system. N-linked (GlcNAc...) asparagine glycosylation occurs at N249. Catalysis depends on charge relay system residues D311 and H359. N451 carries N-linked (GlcNAc...) asparagine glycosylation.

The protein belongs to the pectinacetylesterase family. Notum subfamily. Expressed in the anterior pole.

Its subcellular location is the secreted. The catalysed reaction is [Wnt protein]-O-(9Z)-hexadecenoyl-L-serine + H2O = [Wnt protein]-L-serine + (9Z)-hexadecenoate + H(+). Its function is as follows. Carboxylesterase that acts as a key negative regulator of the Wnt signaling pathway. Acts by specifically mediating depalmitoleoylation of WNT proteins. Serine palmitoleoylation of WNT proteins is required for efficient binding to frizzled receptors. Promotes head regeneration following amputation by inhibiting the Wnt signaling pathway. The sequence is that of Palmitoleoyl-protein carboxylesterase NOTUM from Schmidtea mediterranea (Freshwater planarian flatworm).